Reading from the N-terminus, the 587-residue chain is Lamin-B1 (587 aa).

Positions 1–11 (MATATPVQQRA) are enriched in polar residues. Positions 1-29 (MATATPVQQRAGSRASAPATPFSPTRLSR) are disordered. An N-acetylalanine modification is found at alanine 2. The head stretch occupies residues 2 to 34 (ATATPVQQRAGSRASAPATPFSPTRLSRLQEKE). A phosphothreonine mark is found at threonine 3 and threonine 5. Arginine 14 is subject to Omega-N-methylarginine. A Phosphoserine modification is found at serine 16. Threonine 20 bears the Phosphothreonine mark. Phosphoserine is present on serine 23. The residue at position 25 (threonine 25) is a Phosphothreonine. A Phosphoserine modification is found at serine 28. The region spanning 32–388 (EKEELRELND…KLLEGEEERL (357 aa)) is the IF rod domain. Positions 35 to 69 (ELRELNDRLAVYIDKVRSLETENSALQLQVTEREE) are coil 1A. Residues 70-81 (VRGRELTGLKAL) form a linker 1 region. The segment at 82–215 (YETELADARR…EFRKNMYEEE (134 aa)) is coil 1B. Lysine 102 is covalently cross-linked (Glycyl lysine isopeptide (Lys-Gly) (interchain with G-Cter in SUMO2)). N6-acetyllysine is present on lysine 111. Lysine 123 participates in a covalent cross-link: Glycyl lysine isopeptide (Lys-Gly) (interchain with G-Cter in SUMO2). Phosphoserine is present on serine 126. A Glycyl lysine isopeptide (Lys-Gly) (interchain with G-Cter in SUMO2) cross-link involves residue lysine 145. Position 157 is an N6-acetyllysine; alternate (lysine 157). Lysine 157 participates in a covalent cross-link: Glycyl lysine isopeptide (Lys-Gly) (interchain with G-Cter in SUMO2); alternate. Serine 158 is subject to Phosphoserine. Lysine 181 is covalently cross-linked (Glycyl lysine isopeptide (Lys-Gly) (interchain with G-Cter in SUMO2)). Phosphoserine is present on residues serine 200 and serine 232. Residues 216–243 (INETRRKHETRLVEVDSGRQIEYEYKLA) are linker 2. Residues lysine 241 and lysine 261 each participate in a glycyl lysine isopeptide (Lys-Gly) (interchain with G-Cter in SUMO2) cross-link. The interval 244–386 (QALHEMREQH…YRKLLEGEEE (143 aa)) is coil 2. Lysine 271 is subject to N6-acetyllysine; alternate. Lysine 271 participates in a covalent cross-link: Glycyl lysine isopeptide (Lys-Gly) (interchain with G-Cter in SUMO2); alternate. A phosphoserine mark is found at serine 278 and serine 302. Lysine 312 is covalently cross-linked (Glycyl lysine isopeptide (Lys-Gly) (interchain with G-Cter in SUMO2)). Lysine 330 carries the post-translational modification N6-acetyllysine; alternate. Residue lysine 330 forms a Glycyl lysine isopeptide (Lys-Gly) (interchain with G-Cter in SUMO2); alternate linkage. Phosphoserine is present on residues serine 375 and serine 393. The segment at 387-587 (RLKLSPSPSS…RASNKSCAIM (201 aa)) is tail. Residues 390–409 (LSPSPSSRVTVSRASSSRSV) show a composition bias toward low complexity. Residues 390-432 (LSPSPSSRVTVSRASSSRSVRTTRGKRKRVDVEESEASSSVSI) form a disordered region. An O-linked (GlcNAc) threonine glycan is attached at threonine 399. At arginine 413 the chain carries Omega-N-methylarginine. Positions 415–420 (KRKRVD) match the Nuclear localization signal motif. The LTD domain maps to 430-546 (VSISHSASAT…EEVAQRSTVF (117 aa)). Lysine 483 carries the N6-acetyllysine modification. Lysine 532 is covalently cross-linked (Glycyl lysine isopeptide (Lys-Gly) (interchain with G-Cter in SUMO2)). At serine 534 the chain carries Phosphoserine. Lysine 547 participates in a covalent cross-link: Glycyl lysine isopeptide (Lys-Gly) (interchain with G-Cter in SUMO2). A disordered region spans residues 550 to 587 (IPEEEEEEEEEPIGVPLEEERFHQQGTPRASNKSCAIM). Over residues 551 to 561 (PEEEEEEEEEP) the composition is skewed to acidic residues. A compositionally biased stretch (polar residues) spans 573–587 (QQGTPRASNKSCAIM). Threonine 576 carries the post-translational modification Phosphothreonine. Cysteine 584 is modified (cysteine methyl ester). A lipid anchor (S-farnesyl cysteine) is attached at cysteine 584. Residues 585-587 (AIM) constitute a propeptide, removed in mature form.

This sequence belongs to the intermediate filament family. As to quaternary structure, homodimer. Lamin dimers then assemble into dimeric head-to-tail polymers. Ultimately, two head-to-tail polymers assemble laterally into a protofilament with a uniformly shaped rod of 3.5 nm in diameter. Interacts with SPAG4 and SEPT12. In terms of processing, B-type lamins undergo a series of modifications, such as farnesylation and phosphorylation. Increased phosphorylation of the lamins occurs before envelope disintegration and probably plays a role in regulating lamin associations. Post-translationally, phosphorylation plays a key role in lamin organization, subcellular localization and nuclear envelope disintegration. Phosphorylation by CDK1 at Ser-23 and Ser-393 at the onset of mitosis drives lamin disassembly and nuclear envelope breakdown.

The protein localises to the nucleus lamina. Lamins are intermediate filament proteins that assemble into a filamentous meshwork, and which constitute the major components of the nuclear lamina, a fibrous layer on the nucleoplasmic side of the inner nuclear membrane. Lamins provide a framework for the nuclear envelope, bridging the nuclear envelope and chromatin, thereby playing an important role in nuclear assembly, chromatin organization, nuclear membrane and telomere dynamics. The structural integrity of the lamina is strictly controlled by the cell cycle, as seen by the disintegration and formation of the nuclear envelope in prophase and telophase, respectively. The polypeptide is Lamin-B1 (Lmnb1) (Rattus norvegicus (Rat)).